Reading from the N-terminus, the 147-residue chain is Large ribosomal subunit protein uL13 (147 aa).

It belongs to the universal ribosomal protein uL13 family. As to quaternary structure, part of the 50S ribosomal subunit.

Functionally, this protein is one of the early assembly proteins of the 50S ribosomal subunit, although it is not seen to bind rRNA by itself. It is important during the early stages of 50S assembly. The polypeptide is Large ribosomal subunit protein uL13 (Mycolicibacterium paratuberculosis (strain ATCC BAA-968 / K-10) (Mycobacterium paratuberculosis)).